The chain runs to 242 residues: DnaJ homolog subfamily B member 3 (242 aa).

One can recognise a J domain in the interval 1 to 69 (MVDYYEVLGV…RKREVYDRCG (69 aa)).

As to expression, testis specific. Expression is confined to the germline without any contribution of the somatic components.

In terms of biological role, may operate as a co-chaperone of the male germ cell- and haploid stage-specific Hsp70 proteins. The sequence is that of DnaJ homolog subfamily B member 3 (Dnajb3) from Mus musculus (Mouse).